The following is a 95-amino-acid chain: Aspartyl/glutamyl-tRNA(Asn/Gln) amidotransferase subunit C (95 aa).

Belongs to the GatC family. As to quaternary structure, heterotrimer of A, B and C subunits.

It catalyses the reaction L-glutamyl-tRNA(Gln) + L-glutamine + ATP + H2O = L-glutaminyl-tRNA(Gln) + L-glutamate + ADP + phosphate + H(+). The enzyme catalyses L-aspartyl-tRNA(Asn) + L-glutamine + ATP + H2O = L-asparaginyl-tRNA(Asn) + L-glutamate + ADP + phosphate + 2 H(+). Its function is as follows. Allows the formation of correctly charged Asn-tRNA(Asn) or Gln-tRNA(Gln) through the transamidation of misacylated Asp-tRNA(Asn) or Glu-tRNA(Gln) in organisms which lack either or both of asparaginyl-tRNA or glutaminyl-tRNA synthetases. The reaction takes place in the presence of glutamine and ATP through an activated phospho-Asp-tRNA(Asn) or phospho-Glu-tRNA(Gln). This is Aspartyl/glutamyl-tRNA(Asn/Gln) amidotransferase subunit C from Allorhizobium ampelinum (strain ATCC BAA-846 / DSM 112012 / S4) (Agrobacterium vitis (strain S4)).